The sequence spans 417 residues: Senescence-associated protein AAF, chloroplastic (417 aa).

The transit peptide at 1–36 (MALNVSKVVPNSPILVKSVNASRSRRVLLAYVHHPL) directs the protein to the chloroplast.

This sequence belongs to the ATA15/OSA15 family. As to expression, expressed in leaves. Expressed in 7-day-old seedlings, roots, rosette leaves, cauline leaves and flower buds.

It is found in the plastid. The protein resides in the chloroplast. In terms of biological role, involved in modulation of redox homeostasis to regulate leaf senescence mediated by age and stress factors during plant development. Its function is dependent of EIN2, a central factor of ethylene signaling. The polypeptide is Senescence-associated protein AAF, chloroplastic (Arabidopsis thaliana (Mouse-ear cress)).